The chain runs to 573 residues: Putative ABC transporter ATP-binding protein LJ_1704 (573 aa).

ABC transporter domains lie at 6 to 247 (IEFK…GVRE) and 303 to 536 (LKLD…ASLK). Residues 40-47 (GPSGSGKS) and 337-344 (GQNGAGKT) contribute to the ATP site.

It belongs to the ABC transporter superfamily.

The protein resides in the cell membrane. In terms of biological role, probably part of an ABC transporter complex. Responsible for energy coupling to the transport system. This Lactobacillus johnsonii (strain CNCM I-12250 / La1 / NCC 533) protein is Putative ABC transporter ATP-binding protein LJ_1704.